Reading from the N-terminus, the 124-residue chain is Small ribosomal subunit protein uS12 (124 aa).

Residue D89 is modified to 3-methylthioaspartic acid.

It belongs to the universal ribosomal protein uS12 family. In terms of assembly, part of the 30S ribosomal subunit. Contacts proteins S8 and S17. May interact with IF1 in the 30S initiation complex.

Functionally, with S4 and S5 plays an important role in translational accuracy. Interacts with and stabilizes bases of the 16S rRNA that are involved in tRNA selection in the A site and with the mRNA backbone. Located at the interface of the 30S and 50S subunits, it traverses the body of the 30S subunit contacting proteins on the other side and probably holding the rRNA structure together. The combined cluster of proteins S8, S12 and S17 appears to hold together the shoulder and platform of the 30S subunit. In Shewanella putrefaciens (strain CN-32 / ATCC BAA-453), this protein is Small ribosomal subunit protein uS12.